A 214-amino-acid chain; its full sequence is Urease accessory protein UreG (214 aa).

A GTP-binding site is contributed by 23–30 (GPVGSGKT).

It belongs to the SIMIBI class G3E GTPase family. UreG subfamily. In terms of assembly, homodimer. UreD, UreF and UreG form a complex that acts as a GTP-hydrolysis-dependent molecular chaperone, activating the urease apoprotein by helping to assemble the nickel containing metallocenter of UreC. The UreE protein probably delivers the nickel.

Its subcellular location is the cytoplasm. Facilitates the functional incorporation of the urease nickel metallocenter. This process requires GTP hydrolysis, probably effectuated by UreG. The sequence is that of Urease accessory protein UreG from Bordetella bronchiseptica (strain ATCC BAA-588 / NCTC 13252 / RB50) (Alcaligenes bronchisepticus).